Reading from the N-terminus, the 162-residue chain is NADH-quinone oxidoreductase subunit I 2 (162 aa).

4Fe-4S ferredoxin-type domains follow at residues 52–82 (LRRY…IEAG) and 93–122 (ERYD…EGPN). Residues C62, C65, C68, C72, C102, C105, C108, and C112 each coordinate [4Fe-4S] cluster.

It belongs to the complex I 23 kDa subunit family. In terms of assembly, NDH-1 is composed of 14 different subunits. Subunits NuoA, H, J, K, L, M, N constitute the membrane sector of the complex. It depends on [4Fe-4S] cluster as a cofactor.

It localises to the cell inner membrane. The catalysed reaction is a quinone + NADH + 5 H(+)(in) = a quinol + NAD(+) + 4 H(+)(out). NDH-1 shuttles electrons from NADH, via FMN and iron-sulfur (Fe-S) centers, to quinones in the respiratory chain. The immediate electron acceptor for the enzyme in this species is believed to be ubiquinone. Couples the redox reaction to proton translocation (for every two electrons transferred, four hydrogen ions are translocated across the cytoplasmic membrane), and thus conserves the redox energy in a proton gradient. The protein is NADH-quinone oxidoreductase subunit I 2 of Rhodopseudomonas palustris (strain BisA53).